The following is a 480-amino-acid chain: Protein nucleotidyltransferase YdiU (480 aa).

The ATP site is built by Gly-86, Gly-88, Arg-89, Lys-109, Asp-121, Gly-122, Arg-172, and Arg-179. Residue Asp-248 is the Proton acceptor of the active site. 2 residues coordinate Mg(2+): Asn-249 and Asp-258. Asp-258 is a binding site for ATP.

The protein belongs to the SELO family. Mg(2+) is required as a cofactor. Requires Mn(2+) as cofactor.

It carries out the reaction L-seryl-[protein] + ATP = 3-O-(5'-adenylyl)-L-seryl-[protein] + diphosphate. The enzyme catalyses L-threonyl-[protein] + ATP = 3-O-(5'-adenylyl)-L-threonyl-[protein] + diphosphate. The catalysed reaction is L-tyrosyl-[protein] + ATP = O-(5'-adenylyl)-L-tyrosyl-[protein] + diphosphate. It catalyses the reaction L-histidyl-[protein] + UTP = N(tele)-(5'-uridylyl)-L-histidyl-[protein] + diphosphate. It carries out the reaction L-seryl-[protein] + UTP = O-(5'-uridylyl)-L-seryl-[protein] + diphosphate. The enzyme catalyses L-tyrosyl-[protein] + UTP = O-(5'-uridylyl)-L-tyrosyl-[protein] + diphosphate. In terms of biological role, nucleotidyltransferase involved in the post-translational modification of proteins. It can catalyze the addition of adenosine monophosphate (AMP) or uridine monophosphate (UMP) to a protein, resulting in modifications known as AMPylation and UMPylation. This chain is Protein nucleotidyltransferase YdiU, found in Salmonella arizonae (strain ATCC BAA-731 / CDC346-86 / RSK2980).